We begin with the raw amino-acid sequence, 432 residues long: Homogentisate 1,2-dioxygenase (432 aa).

The Fe cation site is built by histidine 333, glutamate 339, and histidine 369.

Belongs to the homogentisate dioxygenase family. Fe cation is required as a cofactor.

It catalyses the reaction homogentisate + O2 = 4-maleylacetoacetate + H(+). The protein operates within amino-acid degradation; L-phenylalanine degradation; acetoacetate and fumarate from L-phenylalanine: step 4/6. In Dictyostelium discoideum (Social amoeba), this protein is Homogentisate 1,2-dioxygenase (hgd).